Consider the following 314-residue polypeptide: N-myc-interactor (314 aa).

The segment at 1–24 (MDADKDNIKQACDERSAEMDDMRG) is disordered. Ser-16 bears the Phosphoserine mark. The stretch at 31 to 65 (VHEIMSENKELDEEIKKLEAELQSDAREFQIKENV) forms a coiled coil. 2 consecutive NID domains span residues 104-193 (GQAL…GEVE) and 202-293 (RSAV…EVEV).

The protein belongs to the NMI family. Interacts with MYCN and MYC, as well as with other transcription factors with a Zip, HLH or a HLH-Zip motif. Interacts with all STAT proteins except STAT2. Interacts with IRF7, the interaction is direct and leads to the inhibition of IRF7-mediated type I IFN production. Interacts (via coiled-coil domain) with TRIM21 (via the SPRY domain); the interaction leads to 'Lys-63'-linked ubiquitination of NMI. Interacts with IFI35; the interaction is direct and is facilitated by TRIM21. Interacts with TLR4; the interaction is direct and leads to NF-kappa-B activation. In terms of processing, may be ubiquitinated. Expressed in macrophages.

The protein localises to the cytoplasm. It localises to the nucleus. Its subcellular location is the secreted. Functionally, acts as a signaling pathway regulator involved in innate immune system response. In response to interleukin 2/IL2 and interferon IFN-gamma/IFNG, interacts with signal transducer and activator of transcription/STAT which activate the transcription of downstream genes involved in a multitude of signals for development and homeostasis. Enhances the recruitment of CBP/p300 coactivators to STAT1 and STAT5, resulting in increased STAT1- and STAT5-dependent transcription. In response to interferon IFN-alpha, associates in a complex with transcriptional regulator IFI35 to regulate immune response; the complex formation prevents proteasome-mediated degradation of IFI35. In complex with IFI35, negatively regulates nuclear factor NF-kappa-B signaling by inhibiting the nuclear translocation, activation and transcription of NF-kappa-B subunit p65/RELA, resulting in the inhibition of endothelial cell proliferation, migration and re-endothelialization of injured arteries. Negatively regulates virus-triggered type I interferon/IFN production by inducing proteosome-dependent degradation of IRF7, a transcriptional regulator of type I IFN, thereby interfering with cellular antiviral responses. Beside its role as an intracellular signaling pathway regulator, also functions extracellularly as damage-associated molecular patterns (DAMPs) to promote inflammation, when actively released by macrophage to the extracellular space during cell injury or pathogen invasion. Macrophage-secreted NMI activates NF-kappa-B signaling in adjacent macrophages through Toll-like receptor 4/TLR4 binding and activation, thereby inducing NF-kappa-B translocation from the cytoplasm into the nucleus which promotes the release of pro-inflammatory cytokines. The polypeptide is N-myc-interactor (Mus musculus (Mouse)).